We begin with the raw amino-acid sequence, 276 residues long: F420-dependent methylenetetrahydromethanopterin dehydrogenase (276 aa).

Belongs to the MTD family.

It carries out the reaction 5,10-methylenetetrahydromethanopterin + oxidized coenzyme F420-(gamma-L-Glu)(n) + 2 H(+) = 5,10-methenyl-5,6,7,8-tetrahydromethanopterin + reduced coenzyme F420-(gamma-L-Glu)(n). Its function is as follows. Catalyzes the oxidation of methylene-H(4)MPT to methenyl-H(4)MPT(+). In Methanosphaera stadtmanae (strain ATCC 43021 / DSM 3091 / JCM 11832 / MCB-3), this protein is F420-dependent methylenetetrahydromethanopterin dehydrogenase.